A 348-amino-acid chain; its full sequence is Protein RecA (348 aa).

Position 64-71 (64-71 (GPESSGKT)) interacts with ATP.

The protein belongs to the RecA family.

It localises to the cytoplasm. Can catalyze the hydrolysis of ATP in the presence of single-stranded DNA, the ATP-dependent uptake of single-stranded DNA by duplex DNA, and the ATP-dependent hybridization of homologous single-stranded DNAs. It interacts with LexA causing its activation and leading to its autocatalytic cleavage. The protein is Protein RecA of Blastochloris viridis (Rhodopseudomonas viridis).